Reading from the N-terminus, the 1007-residue chain is Kinesin-like protein KIN-7D, chloroplastic (1007 aa).

The transit peptide at 1–53 (MATRPASRQRRASSAAAAVAVVRSSPQPQQQQQQQLPIPQSGSPTSTTTTTTS) directs the protein to the chloroplast. Positions 1–55 (MATRPASRQRRASSAAAAVAVVRSSPQPQQQQQQQLPIPQSGSPTSTTTTTTSSS) are enriched in low complexity. A disordered region spans residues 1 to 79 (MATRPASRQR…LFAGLDEDPA (79 aa)). In terms of domain architecture, Kinesin motor spans 83-402 (NVTVTVRFRP…LKFAHRAKRI (320 aa)). 163–170 (GVTSSGKT) is a binding site for ATP. The stretch at 403 to 495 (EVQASQNKII…QRLTKLILVS (93 aa)) forms a coiled coil. The interval 579–607 (ILTSSEGDKSSLTKSTAPSTPIGESVNFP) is disordered. 3 coiled-coil regions span residues 687–716 (NNEK…ERQI), 754–791 (AADN…TLQA), and 836–907 (SVEI…SVRS). A disordered region spans residues 901 to 941 (ELASVRSPTPRRANSGLRGTRRDSISRRHEPAPRRDNNAGY). The segment covering 920-941 (TRRDSISRRHEPAPRRDNNAGY) has biased composition (basic and acidic residues). Positions 942 to 982 (EREKALEAVLMEKEQKEAELQRRIEESKQKEAFLESELANM) form a coiled coil.

This sequence belongs to the TRAFAC class myosin-kinesin ATPase superfamily. Kinesin family. KIN-7 subfamily. Binds microtubules. Homodimer. Mg(2+) serves as cofactor.

The protein resides in the plastid. It is found in the chloroplast. In terms of biological role, probable minus end-directed motor protein with a microtubule-enhanced ATPase activity. Binds ATP/ADP in vitro. Retains total enzymatic activity even after the removal of the ADP bound in the active site. The polypeptide is Kinesin-like protein KIN-7D, chloroplastic (Oryza sativa subsp. japonica (Rice)).